Consider the following 209-residue polypeptide: Guanylate kinase (209 aa).

A Guanylate kinase-like domain is found at Gly-9–Thr-188. An ATP-binding site is contributed by Ser-16 to Thr-23.

Belongs to the guanylate kinase family.

It localises to the cytoplasm. The catalysed reaction is GMP + ATP = GDP + ADP. In terms of biological role, essential for recycling GMP and indirectly, cGMP. This is Guanylate kinase from Ehrlichia canis (strain Jake).